Reading from the N-terminus, the 91-residue chain is uncharacterized protein (91 aa).

This is an uncharacterized protein from Rickettsia conorii (strain ATCC VR-613 / Malish 7).